The primary structure comprises 595 residues: Putative histone-lysine N-methyltransferase PRDM6 (595 aa).

Residues 27-90 form a disordered region; that stretch reads FPHGGAGPLK…STPASSSTSA (64 aa). Over residues 30–40 the composition is skewed to gly residues; sequence GGAGPLKGSGA. Over residues 49–59 the composition is skewed to pro residues; the sequence is PLQPPPPPPPP. A compositionally biased stretch (low complexity) spans 71–90; that stretch reads PRPASLSSASSTPASSSTSA. The SET domain occupies 246-365; sequence REVCLCTSTV…RGTELLVWYN (120 aa). Residues 473 to 495 form a C2H2-type 1; degenerate zinc finger; sequence WKCGQCFKTFTQRILLQMHVCTQ. 2 C2H2-type zinc fingers span residues 501–523 and 529–551; these read YQCGHCSQSFSQPSELRNHVVTH and FKCGYCGRAFAGATTLNNHIRTH. The segment at 557–579 adopts a C2H2-type 4; degenerate zinc-finger fold; it reads FKCERCERSFTQATQLSRHQRMP.

This sequence belongs to the class V-like SAM-binding methyltransferase superfamily. In terms of assembly, interacts with HDAC1, HDAC2, HDAC3, CBX1 and EP300.

The protein localises to the nucleus. The catalysed reaction is L-lysyl(20)-[histone H4] + S-adenosyl-L-methionine = N(6)-methyl-L-lysyl(20)-[histone H4] + S-adenosyl-L-homocysteine + H(+). Putative histone methyltransferase that acts as a transcriptional repressor of smooth muscle gene expression. Promotes the transition from differentiated to proliferative smooth muscle by suppressing differentiation and maintaining the proliferative potential of vascular smooth muscle cells. Also plays a role in endothelial cells by inhibiting endothelial cell proliferation, survival and differentiation. It is unclear whether it has histone methyltransferase activity in vivo. According to some authors, it does not act as a histone methyltransferase by itself and represses transcription by recruiting EHMT2/G9a. According to others, it possesses histone methyltransferase activity when associated with other proteins and specifically methylates 'Lys-20' of histone H4 in vitro. 'Lys-20' methylation represents a specific tag for epigenetic transcriptional repression. This Homo sapiens (Human) protein is Putative histone-lysine N-methyltransferase PRDM6 (PRDM6).